The chain runs to 501 residues: Adenylosuccinate synthetase 2, chloroplastic (501 aa).

Residues 87 to 93 (GDEGKGK) and 115 to 117 (GHT) each bind GTP. The active-site Proton acceptor is Asp88. Positions 88 and 115 each coordinate Mg(2+). Residues 88–91 (DEGK), 113–116 (NAGH), Thr205, Arg219, Gln300, Thr315, and Arg379 contribute to the IMP site. His116 serves as the catalytic Proton donor. Residue 375–381 (NITGRPR) coordinates substrate. Residues Arg381, 407–409 (KLD), and 490–492 (GIG) contribute to the GTP site.

This sequence belongs to the adenylosuccinate synthetase family. As to quaternary structure, homodimer. Mg(2+) serves as cofactor.

It is found in the plastid. It localises to the chloroplast. The catalysed reaction is IMP + L-aspartate + GTP = N(6)-(1,2-dicarboxyethyl)-AMP + GDP + phosphate + 2 H(+). It participates in purine metabolism; AMP biosynthesis via de novo pathway; AMP from IMP: step 1/2. Plays an important role in the de novo pathway and in the salvage pathway of purine nucleotide biosynthesis. Catalyzes the first committed step in the biosynthesis of AMP from IMP. This is Adenylosuccinate synthetase 2, chloroplastic from Capsicum frutescens (Cayenne pepper).